Here is a 144-residue protein sequence, read N- to C-terminus: Putative pre-16S rRNA nuclease (144 aa).

Belongs to the YqgF nuclease family.

The protein localises to the cytoplasm. In terms of biological role, could be a nuclease involved in processing of the 5'-end of pre-16S rRNA. This chain is Putative pre-16S rRNA nuclease, found in Ralstonia nicotianae (strain ATCC BAA-1114 / GMI1000) (Ralstonia solanacearum).